The chain runs to 243 residues: Secreted RxLR effector protein 28 (243 aa).

Residues 1 to 26 (MHVSRIIAHIALATAITATTVSPTDA) form the signal peptide. Residues 49–52 (RGLR) carry the RxLR motif. The segment at 187–243 (NVDEDKGQNFGHSVSGPPTTTLTGPHTKSGIPPFENLVAPAKGSMPNTRRNGYQFFE) is disordered. Residues 199–216 (SVSGPPTTTLTGPHTKSG) show a composition bias toward low complexity.

It belongs to the RxLR effector family.

The protein resides in the secreted. The protein localises to the host cytoplasm. It is found in the host nucleus. In terms of biological role, effector that significantly enhances susceptibilities of grapevine and tobacco to pathogens. Acts as a broad suppressor of cell death to interrupt plant immunity. Completely inhibits cell death induced by cell death-inducing proteins, including the PAMP elicitor INF1 from P.infestans. Reduces the transcriptional levels of the defense-related genes and impairs the H(2)O(2) accumulation in N.benthamiana. The sequence is that of Secreted RxLR effector protein 28 from Plasmopara viticola (Downy mildew of grapevine).